A 362-amino-acid polypeptide reads, in one-letter code: MSFNTFGHMFRVTTFGESHGVAIGCVVDGCPPLIALTEADIQRDLDRRRPGQSRFTTQRQEADQVKILSGVMVHPQSGLQVTTGAPIALLIENTDQRSKDYSEIKDKFRPGHADFTYEAKYGIRDYRGGGRSSARETATRVAAGAIARKVVPGITVRAALVQMGPHQIDRDNWDWEEVGNNPFFCPDKDKAKFFEDYLDGIRKNGSSIGAVIEVVADGVPAGWGAPIYAKLDTDIAAALMSINAVKGVEIGDGFATAALTGEQNADEMRAGNDGPSFLSNHAGGILGGISTGQPVVARFAVKPTSSILAPRKTVDRDGHDTDILTKGRHDPCVGIRAVSVAEAMVACVLADHLIRHRGQIGG.

2 residues coordinate NADP(+): Arg48 and Arg54. FMN contacts are provided by residues 131 to 133 (RSS), 243 to 244 (NA), Gly287, 302 to 306 (KPTSS), and Arg328.

The protein belongs to the chorismate synthase family. In terms of assembly, homotetramer. FMNH2 serves as cofactor.

It catalyses the reaction 5-O-(1-carboxyvinyl)-3-phosphoshikimate = chorismate + phosphate. It participates in metabolic intermediate biosynthesis; chorismate biosynthesis; chorismate from D-erythrose 4-phosphate and phosphoenolpyruvate: step 7/7. Functionally, catalyzes the anti-1,4-elimination of the C-3 phosphate and the C-6 proR hydrogen from 5-enolpyruvylshikimate-3-phosphate (EPSP) to yield chorismate, which is the branch point compound that serves as the starting substrate for the three terminal pathways of aromatic amino acid biosynthesis. This reaction introduces a second double bond into the aromatic ring system. This chain is Chorismate synthase, found in Rhodopseudomonas palustris (strain BisB18).